Here is a 316-residue protein sequence, read N- to C-terminus: Transaldolase (316 aa).

K125 serves as the catalytic Schiff-base intermediate with substrate.

It belongs to the transaldolase family. Type 1 subfamily. Homodimer.

It localises to the cytoplasm. It catalyses the reaction D-sedoheptulose 7-phosphate + D-glyceraldehyde 3-phosphate = D-erythrose 4-phosphate + beta-D-fructose 6-phosphate. It participates in carbohydrate degradation; pentose phosphate pathway; D-glyceraldehyde 3-phosphate and beta-D-fructose 6-phosphate from D-ribose 5-phosphate and D-xylulose 5-phosphate (non-oxidative stage): step 2/3. In terms of biological role, transaldolase is important for the balance of metabolites in the pentose-phosphate pathway. This Acidovorax sp. (strain JS42) protein is Transaldolase.